Consider the following 176-residue polypeptide: Retinol-binding protein 4-A (176 aa).

The residue at position 1 (serine 1) is an N-acetylserine. Disulfide bonds link cysteine 3–cysteine 159, cysteine 69–cysteine 173, and cysteine 119–cysteine 128. Glutamine 97 contacts substrate.

Belongs to the calycin superfamily. Lipocalin family.

Its subcellular location is the secreted. Its function is as follows. RBP delivers retinol from the liver stores to the peripheral tissues. In plasma, the RBP-retinol complex interacts with transthyretin, this prevents its loss by filtration through the kidney glomeruli. The chain is Retinol-binding protein 4-A (rbp4a) from Oncorhynchus mykiss (Rainbow trout).